The chain runs to 194 residues: Small ribosomal subunit protein uS7 (194 aa).

Belongs to the universal ribosomal protein uS7 family. As to quaternary structure, part of the 30S ribosomal subunit.

In terms of biological role, one of the primary rRNA binding proteins, it binds directly to 16S rRNA where it nucleates assembly of the head domain of the 30S subunit. Is located at the subunit interface close to the decoding center. This chain is Small ribosomal subunit protein uS7, found in Methanocorpusculum labreanum (strain ATCC 43576 / DSM 4855 / Z).